Here is a 170-residue protein sequence, read N- to C-terminus: Cathelicidin antimicrobial peptide (170 aa).

The signal sequence occupies residues 1–30 (MKTQRHGPSLGRWSLVLLLLGLVMPLAIVA). Residues 31–131 (QVLSYQEAVL…DISCDKDNRR (101 aa)) constitute a propeptide, cathelin-like domain (CLD). Disulfide bonds link C86–C97 and C108–C125. Residues 150–162 (LKKIGQKIKDFWG) are active core.

The protein belongs to the cathelicidin family. As to quaternary structure, monomer, homodimer or homotrimer (in vitro). Oligomerizes as tetra- or hexamer in solution (in vitro). Proteolytically cleaved by proteinase PRTN3 into antibacterial peptide LL-37. Proteolytically cleaved by cathepsin CTSG and neutrophil elastase ELANE. Post-translationally, resistant to proteolytic degradation in solution, and when bound to both zwitterionic (mimicking mammalian membranes) and negatively charged membranes (mimicking bacterial membranes). In terms of processing, after secretion onto the skin surface, the CAMP gene product is processed by a serine protease-dependent mechanism into multiple novel antimicrobial peptides distinct from and shorter than cathelicidin LL-37. These peptides show enhanced antimicrobial action, acquiring the ability to kill skin pathogens such as S.aureus, E.coli and C.albicans. These peptides have lost the ability to stimulate CXCL8/IL8 release from keratinocytes. The peptides act synergistically, killing bacteria at lower concentrations when present together, and maintain activity at increased salt condition.

The protein resides in the secreted. It localises to the vesicle. Functionally, antimicrobial protein that is an integral component of the innate immune system. Binds to bacterial lipopolysaccharides (LPS). Acts via neutrophil N-formyl peptide receptors to enhance the release of CXCL2. Postsecretory processing generates multiple cathelicidin antimicrobial peptides with various lengths which act as a topical antimicrobial defense in sweat on skin. The unprocessed precursor form, cathelicidin antimicrobial peptide, inhibits the growth of Gram-negative E.coli and E.aerogenes with efficiencies comparable to that of the mature peptide LL-37 (in vitro). In terms of biological role, antimicrobial peptide that is an integral component of the innate immune system. Binds to bacterial lipopolysaccharides (LPS). Causes membrane permeabilization by forming transmembrane pores (in vitro). Causes lysis of E.coli. Exhibits antimicrobial activity against Gram-negative bacteria such as P.aeruginosa, S.typhimurium, E.aerogenes, E.coli and P.syringae, Gram-positive bacteria such as L.monocytogenes, S.epidermidis, S.pyogenes and S.aureus, as well as vancomycin-resistant enterococci (in vitro). Exhibits antimicrobial activity against methicillin-resistant S.aureus, P.mirabilis, and C.albicans in low-salt media, but not in media containing 100 mM NaCl (in vitro). Forms chiral supramolecular assemblies with quinolone signal (PQS) molecules of P.aeruginosa, which may lead to interference of bacterial quorum signaling and perturbance of bacterial biofilm formation. May form supramolecular fiber-like assemblies on bacterial membranes. Induces cytokine and chemokine producation as well as TNF/TNFA and CSF2/GMCSF production in normal human keratinocytes. Exhibits hemolytic activity against red blood cells. Exhibits antimicrobial activity against E.coli and B.megaterium (in vitro). The polypeptide is Cathelicidin antimicrobial peptide (Trachypithecus cristatus (Silvered leaf-monkey)).